The chain runs to 622 residues: Probable potassium transport system protein Kup (622 aa).

A run of 12 helical transmembrane segments spans residues 7 to 27 (LAIGAIGIVFGDIGTSPLYAF), 44 to 64 (VLGVVSLIFWSMTLIVAIQYV), 95 to 115 (GWLVVLLGVFATSLFYGDSMI), 133 to 153 (PELQGFVIPIALVLLVGLFVL), 165 to 185 (FAPVMIVYFTVIATLGLISIV), 199 to 219 (AVLFFINDGFLAFLALGSVVL), 243 to 263 (WFGFVMPCLLLNYFGQGAMIV), 290 to 310 (LVILATFATFIASQAVISGAF), 338 to 358 (IYIPVINWALMVAVILLVLTF), 370 to 390 (IAVTGAVTIDTLLMAVLLVGV), 395 to 415 (WYYAAPVVIVFLIIDGAYFAA), and 422 to 442 (DGGWFPLVVGLIVFTLLTTWA).

The protein belongs to the HAK/KUP transporter (TC 2.A.72) family.

The protein resides in the cell inner membrane. It carries out the reaction K(+)(in) + H(+)(in) = K(+)(out) + H(+)(out). Transport of potassium into the cell. Likely operates as a K(+):H(+) symporter. This Erythrobacter litoralis (strain HTCC2594) protein is Probable potassium transport system protein Kup.